Consider the following 258-residue polypeptide: Imidazole glycerol phosphate synthase subunit HisF (258 aa).

Residues Asp11 and Asp130 contribute to the active site.

It belongs to the HisA/HisF family. Heterodimer of HisH and HisF.

The protein resides in the cytoplasm. It catalyses the reaction 5-[(5-phospho-1-deoxy-D-ribulos-1-ylimino)methylamino]-1-(5-phospho-beta-D-ribosyl)imidazole-4-carboxamide + L-glutamine = D-erythro-1-(imidazol-4-yl)glycerol 3-phosphate + 5-amino-1-(5-phospho-beta-D-ribosyl)imidazole-4-carboxamide + L-glutamate + H(+). It participates in amino-acid biosynthesis; L-histidine biosynthesis; L-histidine from 5-phospho-alpha-D-ribose 1-diphosphate: step 5/9. IGPS catalyzes the conversion of PRFAR and glutamine to IGP, AICAR and glutamate. The HisF subunit catalyzes the cyclization activity that produces IGP and AICAR from PRFAR using the ammonia provided by the HisH subunit. The polypeptide is Imidazole glycerol phosphate synthase subunit HisF (Xanthomonas oryzae pv. oryzae (strain MAFF 311018)).